We begin with the raw amino-acid sequence, 252 residues long: Putative hydro-lyase OB3382 (252 aa).

The protein belongs to the D-glutamate cyclase family.

This is Putative hydro-lyase OB3382 from Oceanobacillus iheyensis (strain DSM 14371 / CIP 107618 / JCM 11309 / KCTC 3954 / HTE831).